Here is a 318-residue protein sequence, read N- to C-terminus: Transaldolase (318 aa).

Lysine 132 (schiff-base intermediate with substrate) is an active-site residue.

This sequence belongs to the transaldolase family. Type 1 subfamily. Homodimer.

It localises to the cytoplasm. It carries out the reaction D-sedoheptulose 7-phosphate + D-glyceraldehyde 3-phosphate = D-erythrose 4-phosphate + beta-D-fructose 6-phosphate. The protein operates within carbohydrate degradation; pentose phosphate pathway; D-glyceraldehyde 3-phosphate and beta-D-fructose 6-phosphate from D-ribose 5-phosphate and D-xylulose 5-phosphate (non-oxidative stage): step 2/3. Its function is as follows. Transaldolase is important for the balance of metabolites in the pentose-phosphate pathway. In Shewanella baltica (strain OS185), this protein is Transaldolase.